The sequence spans 86 residues: Mu-theraphotoxin-Cg2a 1 (86 aa).

An N-terminal signal peptide occupies residues 1–21; that stretch reads MKVSVVITLAVLGIMFVWASA. Positions 22-50 are excised as a propeptide; the sequence is AELEERGSDQRDSPAWLKSMERIFQSEER. 3 disulfide bridges follow: Cys52–Cys66, Cys59–Cys71, and Cys65–Cys78. Phe84 carries the post-translational modification Phenylalanine amide.

Belongs to the neurotoxin 10 (Hwtx-1) family. 37 (Jztx-31) subfamily. Expressed by the venom gland.

It localises to the secreted. Functionally, inhibits both peak current and fast inactivation of voltage-gated sodium channels (Nav) channels. Inhibits the inactivation of Nav on DRG neurons (EC(50)=1.77 uM) and peak current of cardiac myocytes (IC(50)=0.90 uM). This chain is Mu-theraphotoxin-Cg2a 1, found in Chilobrachys guangxiensis (Chinese earth tiger tarantula).